Here is a 740-residue protein sequence, read N- to C-terminus: Ion-translocating oxidoreductase complex subunit C (740 aa).

4Fe-4S ferredoxin-type domains follow at residues 369-397 (GEPQEEQSCIRCSACADACPADLLPQQLY) and 407-436 (KATTHNIADCIECGACAWVCPSNIPLVQYF). Residues C377, C380, C383, C387, C416, C419, C422, and C426 each contribute to the [4Fe-4S] cluster site. The interval 602-718 (KLEQQQANAE…EEQVDPRKAA (117 aa)) is disordered.

Belongs to the 4Fe4S bacterial-type ferredoxin family. RnfC subfamily. The complex is composed of six subunits: RsxA, RsxB, RsxC, RsxD, RsxE and RsxG. It depends on [4Fe-4S] cluster as a cofactor.

It localises to the cell inner membrane. Functionally, part of a membrane-bound complex that couples electron transfer with translocation of ions across the membrane. Required to maintain the reduced state of SoxR. The sequence is that of Ion-translocating oxidoreductase complex subunit C from Shigella sonnei (strain Ss046).